The primary structure comprises 207 residues: Ribosome maturation factor RimM (207 aa).

The region spanning 114–207 (DDEYYWVDLI…RIDSDWPLDY (94 aa)) is the PRC barrel domain.

The protein belongs to the RimM family. As to quaternary structure, binds ribosomal protein uS19.

The protein localises to the cytoplasm. In terms of biological role, an accessory protein needed during the final step in the assembly of 30S ribosomal subunit, possibly for assembly of the head region. Essential for efficient processing of 16S rRNA. May be needed both before and after RbfA during the maturation of 16S rRNA. It has affinity for free ribosomal 30S subunits but not for 70S ribosomes. This chain is Ribosome maturation factor RimM, found in Bordetella pertussis (strain Tohama I / ATCC BAA-589 / NCTC 13251).